The following is a 208-amino-acid chain: Ribonuclease HII (208 aa).

The region spanning 12–201 (ELVAGVDEVG…VRALLEPVAV (190 aa)) is the RNase H type-2 domain. Residues Asp-18, Glu-19, and Asp-110 each coordinate a divalent metal cation.

It belongs to the RNase HII family. Requires Mn(2+) as cofactor. The cofactor is Mg(2+).

It is found in the cytoplasm. The catalysed reaction is Endonucleolytic cleavage to 5'-phosphomonoester.. Endonuclease that specifically degrades the RNA of RNA-DNA hybrids. The sequence is that of Ribonuclease HII from Ectopseudomonas mendocina (strain ymp) (Pseudomonas mendocina).